A 332-amino-acid chain; its full sequence is uncharacterized protein (332 aa).

Positions 1–32 are cleaved as a signal peptide; it reads MSRDRGARGLRKYGRFALATGAATALSLTASG. Cys-33 is lipidated: N-palmitoyl cysteine. The S-diacylglycerol cysteine moiety is linked to residue Cys-33.

The protein resides in the cell membrane. This is an uncharacterized protein from Streptomyces avermitilis (strain ATCC 31267 / DSM 46492 / JCM 5070 / NBRC 14893 / NCIMB 12804 / NRRL 8165 / MA-4680).